The chain runs to 1072 residues: DNA-directed RNA polymerase subunit beta (1072 aa).

The protein belongs to the RNA polymerase beta chain family. In plastids the minimal PEP RNA polymerase catalytic core is composed of four subunits: alpha, beta, beta', and beta''. When a (nuclear-encoded) sigma factor is associated with the core the holoenzyme is formed, which can initiate transcription.

Its subcellular location is the plastid. The protein localises to the chloroplast. The enzyme catalyses RNA(n) + a ribonucleoside 5'-triphosphate = RNA(n+1) + diphosphate. In terms of biological role, DNA-dependent RNA polymerase catalyzes the transcription of DNA into RNA using the four ribonucleoside triphosphates as substrates. In Crucihimalaya wallichii (Rock-cress), this protein is DNA-directed RNA polymerase subunit beta.